The primary structure comprises 726 residues: Serine/threonine-protein kinase PKH3 (726 aa).

In terms of domain architecture, Protein kinase spans 10–271 (FLFREELGHG…LEQIKKHKWF (262 aa)). Residues 16–24 (LGHGSYSTV) and Lys-39 each bind ATP. The Proton acceptor role is filled by Asp-136. Positions 629 to 679 (QDIPLPSPAKSSSNSGVSEPISKIPPRQLVSASEQSHKAKSEAHTKKANSY) are disordered. Residues 663-673 (QSHKAKSEAHT) are compositionally biased toward basic and acidic residues.

This sequence belongs to the protein kinase superfamily. Ser/Thr protein kinase family.

It carries out the reaction L-seryl-[protein] + ATP = O-phospho-L-seryl-[protein] + ADP + H(+). It catalyses the reaction L-threonyl-[protein] + ATP = O-phospho-L-threonyl-[protein] + ADP + H(+). Functionally, serine/threonine-protein kinase. The protein is Serine/threonine-protein kinase PKH3 (PKH3) of Eremothecium gossypii (strain ATCC 10895 / CBS 109.51 / FGSC 9923 / NRRL Y-1056) (Yeast).